Reading from the N-terminus, the 99-residue chain is Virion membrane protein OPG135 (99 aa).

An N-terminal signal peptide occupies residues 1-22 (MSCYTAILKSVGGLALFQVANG). At 23 to 45 (AIDLCRHFFMYFCEQKLRPNSFW) the chain is on the intravirion side. Residues 46 to 66 (FVVVRAIASMIMYLVLGIALL) traverse the membrane as a helical segment. Residues 67 to 83 (YISEQDDKKNTNNDGSN) are Virion surface-facing. A compositionally biased stretch (basic and acidic residues) spans 73–89 (DKKNTNNDGSNNDKRNE). A disordered region spans residues 73–99 (DKKNTNNDGSNNDKRNESSINSNSSPK). N-linked (GlcNAc...) asparagine; by host glycosylation occurs at N88. Polar residues predominate over residues 90-99 (SSINSNSSPK).

This sequence belongs to the oerthopoxvirus OPG135 family.

Its subcellular location is the virion membrane. It localises to the host cytoplasm. In terms of biological role, envelope protein. Required for an early step in virion morphogenesis. This is Virion membrane protein OPG135 (OPG135) from Homo sapiens (Human).